Here is a 94-residue protein sequence, read N- to C-terminus: DNA-binding protein HU (94 aa).

A disordered region spans residues 55 to 94 (RAERPGRNPKTGEPIMIAASNNPSFKPGKALKDAVKSSAG). Positions 84-94 (ALKDAVKSSAG) are enriched in basic and acidic residues.

Belongs to the bacterial histone-like protein family.

Histone-like DNA-binding protein which is capable of wrapping DNA to stabilize it, and thus to prevent its denaturation under extreme environmental conditions. This Xylella fastidiosa (strain Temecula1 / ATCC 700964) protein is DNA-binding protein HU (hup).